The primary structure comprises 94 residues: Large ribosomal subunit protein bL28 (94 aa).

Belongs to the bacterial ribosomal protein bL28 family.

This Maricaulis maris (strain MCS10) (Caulobacter maris) protein is Large ribosomal subunit protein bL28.